The primary structure comprises 384 residues: Terpene cyclase ascI (384 aa).

A signal peptide spans 1–25 (MPQLAGKLILAGLIPLGAWVLHGFA). Residues 82-102 (LSLHAFMFAGQGVPLLVLNML) form a helical membrane-spanning segment. Residue asparagine 109 is glycosylated (N-linked (GlcNAc...) asparagine). The next 4 helical transmembrane spans lie at 119-139 (VFGI…YLFL), 164-184 (AVGF…SLPH), 194-214 (VLSV…AYFA), and 235-255 (GAVY…TFAI). The N-linked (GlcNAc...) asparagine glycan is linked to asparagine 258. 2 helical membrane passes run 291–311 (WFLQ…AIGI) and 330–350 (IALR…ALSL). N-linked (GlcNAc...) asparagine glycosylation occurs at asparagine 372.

The protein belongs to the membrane-bound ascI terpene cyclase family.

It localises to the membrane. It carries out the reaction 16-hydroxy-ilicicolin A epoxide = ascofuranol. It participates in secondary metabolite biosynthesis; terpenoid biosynthesis. Functionally, epoxide hydrolase; part of the asc-2 gene cluster that mediates the biosynthesis of ascofuranone, a strong inhibitor of cyanide-insensitive alternative oxidases and a promising drug candidate against African trypanosomiasis. The first step in the pathway is performed by the non-reducing polyketide synthase ascC that produces orsellinic acid by condensing acetyl-CoA with 3 malonyl-CoA units. Orsellinic acid is then prenylated by the prenyltransferase ascA to yield ilicicolinic acid B. Ilicicolinic acid B is further reduced to ilicicolin B by the reductase ascB. The halogenase ascD then chlorinates ilicicolin B to produce ilicicolin A which is converted to ilicicolin A epoxide by the cytochrome P450 monooxygenase ascE that catalyzes stereoselective epoxidation of the terminal double bond of the prenyl group. Ilicicolin A epoxide is the last common precursor for the biosynthesis of ascofuranone and ascochlorin. The terpene cyclase ascF produces a monocyclic terpene, and the cyclization reaction is proposed to be initiated by protonation of the terminal epoxide of ilicicolin A epoxide to generate a monocyclic tertiarycation, which is followed by a series of hydride and methyl shifts with abstraction of proton, leading to the formation of the (14S,15R,19R)-trimethylcyclohexanone ring structure of ilicicolin C, which is finally reduced to ascochlorin by the dehydrogenase ascG. On the other hand, ilicicolin A epoxide is hydroxylated by the cytochrome P450 monooxygenase ascH, and the resultant product is cyclized by the terpene cyclase ascI to ascofuranol via protonation-initiated epoxide ring opening, which facilitates the 6-endo-tet cyclization to form the tetrahy-drofuran ring. Finally, ascofuranol is oxidized into ascofuranone by ascJ. This chain is Terpene cyclase ascI, found in Acremonium egyptiacum (Oospora egyptiaca).